The primary structure comprises 206 residues: Large ribosomal subunit protein uL4 (206 aa).

The segment at 47-79 is disordered; sequence GTKGQKNRSAVRGGGAKPWAQKGSGRARAGTSR. Residues 69–79 are compositionally biased toward low complexity; that stretch reads GSGRARAGTSR.

The protein belongs to the universal ribosomal protein uL4 family. As to quaternary structure, part of the 50S ribosomal subunit.

In terms of biological role, one of the primary rRNA binding proteins, this protein initially binds near the 5'-end of the 23S rRNA. It is important during the early stages of 50S assembly. It makes multiple contacts with different domains of the 23S rRNA in the assembled 50S subunit and ribosome. Functionally, forms part of the polypeptide exit tunnel. This chain is Large ribosomal subunit protein uL4, found in Hydrogenovibrio crunogenus (strain DSM 25203 / XCL-2) (Thiomicrospira crunogena).